Reading from the N-terminus, the 210-residue chain is Probable nicotinate-nucleotide adenylyltransferase (210 aa).

It belongs to the NadD family.

It catalyses the reaction nicotinate beta-D-ribonucleotide + ATP + H(+) = deamido-NAD(+) + diphosphate. Its pathway is cofactor biosynthesis; NAD(+) biosynthesis; deamido-NAD(+) from nicotinate D-ribonucleotide: step 1/1. In terms of biological role, catalyzes the reversible adenylation of nicotinate mononucleotide (NaMN) to nicotinic acid adenine dinucleotide (NaAD). This is Probable nicotinate-nucleotide adenylyltransferase from Vesicomyosocius okutanii subsp. Calyptogena okutanii (strain HA).